Here is a 428-residue protein sequence, read N- to C-terminus: Magnesium transporter MRS2-C (428 aa).

2 helical membrane passes run 364 to 384 and 400 to 420; these read LLLTTATFVVAIFGVVSGVFG and WTLVITGVCGLVIFCCFIWYF. The Required for magnesium transport activity signature appears at 384–386; it reads GMN.

Belongs to the CorA metal ion transporter (MIT) (TC 1.A.35.5) family.

The protein resides in the membrane. Magnesium transporter that may mediate the influx of magnesium. The chain is Magnesium transporter MRS2-C from Oryza sativa subsp. indica (Rice).